Consider the following 902-residue polypeptide: Chitin synthase 3 (902 aa).

The segment covering 1–15 (MAYNRLDDDYFDNRR) has biased composition (basic and acidic residues). A disordered region spans residues 1 to 68 (MAYNRLDDDY…MGPGRHTPSD (68 aa)). Over residues 19 to 30 (NRPPPHRTPSPG) the composition is skewed to pro residues. N-linked (GlcNAc...) asparagine glycosylation is present at asparagine 80. Residues 104–161 (HHDAYYNPTYTPTPNEAQTPYGEPGYEHDGRPLLPQQDSYGQYSDNPQQQQQQQGGLK) are disordered. Composition is skewed to polar residues over residues 111 to 121 (PTYTPTPNEAQ) and 139 to 150 (QQDSYGQYSDNP). Transmembrane regions (helical) follow at residues 449-469 (SAFGFISVLPGAFSAYRYIAL), 547-567 (RWLNGSFFAAIYAIAHFYQFF), 577-597 (IAFFIEFTFNTVNMIFAWFAI), 623-643 (ILGVCFEWLYGVSLITCFVLA), 656-676 (LAMIYFWAIIFCYLLFAAVFI), 699-719 (VVVTLILSIMSTYGIWLVASL), 731-751 (LVQYMLLSPTFTNVLNVYAFC), 830-850 (VVVLLWMVTNFGLAAVVLSTA), and 874-894 (VVLYSVAALSGFKFIGAMWFL).

Belongs to the chitin synthase family. Class II subfamily.

The protein localises to the cell membrane. The enzyme catalyses [(1-&gt;4)-N-acetyl-beta-D-glucosaminyl](n) + UDP-N-acetyl-alpha-D-glucosamine = [(1-&gt;4)-N-acetyl-beta-D-glucosaminyl](n+1) + UDP + H(+). Functionally, polymerizes chitin, a structural polymer of the cell wall and septum, by transferring the sugar moiety of UDP-GlcNAc to the non-reducing end of the growing chitin polymer. CHS1 and CHS3 have compensatory functions in cell wall modifications in responses to stresses. Might function as a negative regulator on expression of other CHS genes. The sequence is that of Chitin synthase 3 from Pyricularia oryzae (strain 70-15 / ATCC MYA-4617 / FGSC 8958) (Rice blast fungus).